We begin with the raw amino-acid sequence, 1175 residues long: Tyrosine-protein phosphatase non-receptor type 21 (1175 aa).

Positions 23–308 constitute an FERM domain; sequence LVARIQLLNN…ARHKFYRLNQ (286 aa). Residues 395–421 show a composition bias toward polar residues; the sequence is YSAHSTNSLNTPQPYLQPSPMSSNPSI. A disordered region spans residues 395-445; that stretch reads YSAHSTNSLNTPQPYLQPSPMSSNPSIPGSDVMRPDYIPSHRHSALIPPSY. Phosphoserine occurs at positions 577, 589, 590, 637, 673, 710, 711, 798, 800, and 805. The tract at residues 663–702 is disordered; sequence DVAPRTFSAGSQSSVFSDKVKQEGTEEQGSGGYSHKKSLS. The Tyrosine-protein phosphatase domain maps to 897–1168; that stretch reads VFTEYERILK…TFVYRVLIQF (272 aa). Residues Glu-1068, 1109 to 1115, and Gln-1153 contribute to the substrate site; that span reads CSAGVGR. The active-site Phosphocysteine intermediate is Cys-1109.

It belongs to the protein-tyrosine phosphatase family. Non-receptor class subfamily. As to expression, particularly abundantly in adrenal glands.

The protein localises to the cytoplasm. It is found in the cytoskeleton. The catalysed reaction is O-phospho-L-tyrosyl-[protein] + H2O = L-tyrosyl-[protein] + phosphate. The protein is Tyrosine-protein phosphatase non-receptor type 21 (Ptpn21) of Rattus norvegicus (Rat).